Here is a 230-residue protein sequence, read N- to C-terminus: Cytidylate kinase (230 aa).

12–20 (GPSGAGKGT) is an ATP binding site.

Belongs to the cytidylate kinase family. Type 1 subfamily.

The protein localises to the cytoplasm. It catalyses the reaction CMP + ATP = CDP + ADP. It carries out the reaction dCMP + ATP = dCDP + ADP. This is Cytidylate kinase from Yersinia enterocolitica serotype O:8 / biotype 1B (strain NCTC 13174 / 8081).